Reading from the N-terminus, the 181-residue chain is HGPRTase-like protein 2 (181 aa).

This sequence belongs to the purine/pyrimidine phosphoribosyltransferase family. Archaeal HPRT subfamily.

Its function is as follows. May catalyze a purine salvage reaction, the substrate is unknown. The chain is HGPRTase-like protein 2 from Natrialba magadii (strain ATCC 43099 / DSM 3394 / CCM 3739 / CIP 104546 / IAM 13178 / JCM 8861 / NBRC 102185 / NCIMB 2190 / MS3) (Natronobacterium magadii).